A 274-amino-acid chain; its full sequence is Ceramide synthase (274 aa).

Positions 34 to 261 (ADAVIVSARL…ICRGACRLFW (228 aa)) constitute a TLC domain. 4 consecutive transmembrane segments (helical) span residues 130–150 (FLMV…SVVW), 159–179 (LGCM…KILI), 194–214 (ALML…LYWA), and 223–243 (LLAV…LLLA).

As to expression, expressed in testis. Expressed in the retina with higher expression levels in the macular than in the peripheral region.

The protein resides in the golgi apparatus membrane. It is found in the endoplasmic reticulum membrane. The catalysed reaction is sphing-4-enine + octadecanoyl-CoA = N-octadecanoylsphing-4-enine + CoA + H(+). It carries out the reaction eicosanoyl-CoA + sphing-4-enine = N-eicosanoyl-sphing-4-enine + CoA + H(+). It catalyses the reaction sphing-4-enine + hexadecanoyl-CoA = N-hexadecanoylsphing-4-enine + CoA + H(+). Involved in ceramide synthesis. The polypeptide is Ceramide synthase (Homo sapiens (Human)).